The primary structure comprises 572 residues: Proline--tRNA ligase (572 aa).

Belongs to the class-II aminoacyl-tRNA synthetase family. ProS type 1 subfamily. Homodimer.

It localises to the cytoplasm. It carries out the reaction tRNA(Pro) + L-proline + ATP = L-prolyl-tRNA(Pro) + AMP + diphosphate. Catalyzes the attachment of proline to tRNA(Pro) in a two-step reaction: proline is first activated by ATP to form Pro-AMP and then transferred to the acceptor end of tRNA(Pro). As ProRS can inadvertently accommodate and process non-cognate amino acids such as alanine and cysteine, to avoid such errors it has two additional distinct editing activities against alanine. One activity is designated as 'pretransfer' editing and involves the tRNA(Pro)-independent hydrolysis of activated Ala-AMP. The other activity is designated 'posttransfer' editing and involves deacylation of mischarged Ala-tRNA(Pro). The misacylated Cys-tRNA(Pro) is not edited by ProRS. This Bacillus licheniformis (strain ATCC 14580 / DSM 13 / JCM 2505 / CCUG 7422 / NBRC 12200 / NCIMB 9375 / NCTC 10341 / NRRL NRS-1264 / Gibson 46) protein is Proline--tRNA ligase.